Consider the following 518-residue polypeptide: Cytochrome P450 monooxygenase ARMGADRAFT_1018417 (518 aa).

The helical transmembrane segment at 3-23 (LFSAYALAFSLLMIPLILYIL) threads the bilayer. Cys433 provides a ligand contact to heme. An N-linked (GlcNAc...) asparagine glycan is attached at Asn455.

Belongs to the cytochrome P450 family. Heme is required as a cofactor.

The protein localises to the membrane. The protein operates within secondary metabolite biosynthesis. Its function is as follows. Cytochrome P450 monooxygenase, part of the gene cluster that mediates the biosynthesis of melleolides, a range of antifungal and phytotoxic polyketide derivatives composed of an orsellinic acid (OA) moiety esterified to various sesquiterpene alcohols. The first step in melleolides biosynthesis is performed by the delta(6)-protoilludene synthase PRO1 which catalyzes the cyclization of farnesyl diphosphate to protoilludene. The orsellinic acid synthase armB produces OA by condensing acetyl-CoA with 3 malonyl-CoA units in a three-round chain elongation reaction folowed by a C2-C7 ring closure. ArmB further catalyzes the trans-esterification of OA to the various sesquiterpene alcohols resulting from the hydroxylation of protoilludene. The melleolides cluster also includes 5 cytochrome P450 monooxygenases, 4 NAD(+)-dependent oxidoreductases, one flavin-dependent oxidoreductase, and one O-methyltransferase. The cytochrome P450 monooxygenases may be involved in protoilludene hydroxylation to elaborate melleolides with multiple alcohol groups, such as melleolide D, which carries alcohol functionalities at C-4, C-5, C-10, and C-13. The role of the NAD(+)-dependent enzymes remains unknown. Numerous melleolides, including arnamial, show 5'-O-methylation of the aromatic moiety which may be catalyzed by the methyltransferase encoded in the cluster. The flavin-dependent oxidoreductase might represent the dehydrogenase yielding the aldehyde in position 1 of arnamial and other melleolides. Finally, several halogenase localized outside of the cluster, are able to catalyze the transfer of a single chlorine atom to the melleolide backbone, resulting in a 6'-chloromelleolide product. This Armillaria gallica (Bulbous honey fungus) protein is Cytochrome P450 monooxygenase ARMGADRAFT_1018417.